A 213-amino-acid chain; its full sequence is Lactobacillus shifted protein (213 aa).

Over residues 28–38 (PRFTENAMQPN) the composition is skewed to polar residues. Disordered stretches follow at residues 28-56 (PRFT…DATP) and 182-213 (PTSS…YEQR).

The sequence is that of Lactobacillus shifted protein (lbsA) from Emericella nidulans (strain FGSC A4 / ATCC 38163 / CBS 112.46 / NRRL 194 / M139) (Aspergillus nidulans).